Reading from the N-terminus, the 903-residue chain is MTYELEQLGYKKQVCQKCGNTFWSIRERATCGDAPCDEYEFIGNPVTDKQYDLMGIQKKFKGFFKDHGHTPINRYPVLAKRWRNDVFLVGASIYDFQPWVTSGMVRPPANPLVVAQPSIRLNDVDNVGRTGRHMTCFTMGAHHAFNTDETPIYWKNETLRYCHEFLVSIGINPEEITYIESWWKGGGNEGPSFEICAHGVELATLVFIQYATTKDGLKEIPLKIVDTGYGLERIAWVSQGTPTAYDATFGSVIDKLTDISGVELNTEILSENARIAGMMDIEDISDLKLLRKKVADKLSLDPDMLKKTTAPMEAIYIVADHTRCLSFMLADGIIPSNVKEGYLARLVLRRTVKYMNELGLNESLSDIMKMQVDYLSKTYPEIKDNKDHIINITDLEEERYHTTLTKGKNLVKRSIKTLKKQNKKSFPTDMLINFYDSHGIPPETVEAISKENAFDANIPDNFYTQIAAAHEEEEEEEIEEMELNFPKTKLSFYDDLKQRTFTAKVLGVVDSNKIILNQTIYYPEGGGQPSDIGTITRVNGEVLNITYAQKVDGIVLHHVAKEDESKLDNIVGEEITGEIDSKRRDLLTRNHTATHLVIASAREVLGKHIWQAGAQKGLDKTRIDLSHYKRISHEEVQEIERLANKRVQENHPVNIQWYDRTDAEVKYGFKLYQGGIVPGKNIRVVEIPGIDVQACAGTHCEKTGDIGVIKLLRTERVQDGVERLEYAVSDSGIKKIQDDDDIIRNSSDVFGVDAEQLPRTCKRFFNEWKEQQKRIKSLEKQLAQVKIFSLENEIANINGYNVITEVLDVDNNQLREIAINLVEKEEVADIAILINNNGNIVASSNNKILEKGMKMGDVVNDIGKFLGGRGGGKPTLAQGAKMTDLSRKDEAFESVKEQIRSWN.

Residues His-591, His-595, Cys-695, and His-699 each contribute to the Zn(2+) site.

It belongs to the class-II aminoacyl-tRNA synthetase family. Requires Zn(2+) as cofactor.

The protein localises to the cytoplasm. It carries out the reaction tRNA(Ala) + L-alanine + ATP = L-alanyl-tRNA(Ala) + AMP + diphosphate. Its function is as follows. Catalyzes the attachment of alanine to tRNA(Ala) in a two-step reaction: alanine is first activated by ATP to form Ala-AMP and then transferred to the acceptor end of tRNA(Ala). Also edits incorrectly charged Ser-tRNA(Ala) and Gly-tRNA(Ala) via its editing domain. This is Alanine--tRNA ligase from Methanosphaera stadtmanae (strain ATCC 43021 / DSM 3091 / JCM 11832 / MCB-3).